The following is a 301-amino-acid chain: F-actin-capping protein subunit beta (301 aa).

Ser-31 carries the post-translational modification Phosphoserine. N6-acetyllysine is present on Lys-264.

The protein belongs to the F-actin-capping protein beta subunit family. As to quaternary structure, component of the F-actin capping complex, composed of a heterodimer of an alpha and a beta subunit. Subunit of dynactin, a multiprotein complex part of a tripartite complex with dynein and a adapter, such as BICDL1, BICD2 or HOOK3. The dynactin complex is built around ACTR1A/ACTB filament and consists of an actin-related filament composed of a shoulder domain, a pointed end and a barbed end. Its length is defined by its flexible shoulder domain. The soulder is composed of 2 DCTN1 subunits, 4 DCTN2 and 2 DCTN3. The 4 DCNT2 (via N-terminus) bind the ACTR1A filament and act as molecular rulers to determine the length. The pointed end is important for binding dynein-dynactin cargo adapters. Consists of 4 subunits: ACTR10, DCNT4, DCTN5 and DCTN6. The barbed end is composed of a CAPZA1:CAPZB heterodimers, which binds ACTR1A/ACTB filament and dynactin and stabilizes dynactin. Interacts with ARHGAP17. Interaction with RCSD1/CAPZIP. Component of the WASH complex, composed of F-actin-capping protein subunit alpha (CAPZA1, CAPZA2 or CAPZA3), F-actin-capping protein subunit beta (CAPZB), WASH (WASHC1, WASH2P, WASH3P, WASH4P, WASH5P or WASH6P), WASHC2 (WASHC2A or WASHC2C), WASHC3, WASHC4 and WASHC5. Interacts with ACTG1. Directly interacts with CRACD; this interaction decreases binding to actin. In terms of tissue distribution, the isoform beta-3 is predominantly expressed in the testis. It is only detected in total sperm, sperm heads and the calyx fraction, but not in sperm tails or any supernatant fraction. Weaker expression also found in brain.

It localises to the cytoplasm. Its subcellular location is the cytoskeleton. It is found in the perinuclear theca. The protein resides in the calyx. F-actin-capping proteins bind in a Ca(2+)-independent manner to the fast growing ends of actin filaments (barbed end) thereby blocking the exchange of subunits at these ends. Unlike other capping proteins (such as gelsolin and severin), these proteins do not sever actin filaments. Plays a role in the regulation of cell morphology and cytoskeletal organization. Forms, with CAPZB, the barbed end of the fast growing ends of actin filaments in the dynactin complex and stabilizes dynactin structure. The dynactin multiprotein complex activates the molecular motor dynein for ultra-processive transport along microtubules. In Bos taurus (Bovine), this protein is F-actin-capping protein subunit beta (CAPZB).